The primary structure comprises 355 residues: Uroporphyrinogen decarboxylase (355 aa).

Residues 27–31 (RQAGR), aspartate 77, tyrosine 154, threonine 209, and histidine 328 each bind substrate.

This sequence belongs to the uroporphyrinogen decarboxylase family. Homodimer.

The protein localises to the cytoplasm. The catalysed reaction is uroporphyrinogen III + 4 H(+) = coproporphyrinogen III + 4 CO2. Its pathway is porphyrin-containing compound metabolism; protoporphyrin-IX biosynthesis; coproporphyrinogen-III from 5-aminolevulinate: step 4/4. In terms of biological role, catalyzes the decarboxylation of four acetate groups of uroporphyrinogen-III to yield coproporphyrinogen-III. The chain is Uroporphyrinogen decarboxylase from Aliivibrio fischeri (strain ATCC 700601 / ES114) (Vibrio fischeri).